The sequence spans 637 residues: Poly(A) polymerase beta (637 aa).

The span at 1-10 shows a compositional bias: low complexity; the sequence is MMPFPVTTQG. A disordered region spans residues 1–23; the sequence is MMPFPVTTQGPPQPAPPPNRYGV. ATP contacts are provided by residues 101–103, T110, 114–116, D168, K229, Y238, and 247–248; these read FGS, DID, and GV. Residues D114, D116, and D168 each coordinate Mg(2+). The interval 535-555 is disordered; that stretch reads SVPSSTSTMKTGPLISSSQGR.

Belongs to the poly(A) polymerase family. In terms of assembly, interacts with GSG1. The cofactor is Mg(2+). Mn(2+) serves as cofactor. Testis specific.

The protein resides in the nucleus. The enzyme catalyses RNA(n) + ATP = RNA(n)-3'-adenine ribonucleotide + diphosphate. This chain is Poly(A) polymerase beta, found in Homo sapiens (Human).